Here is a 77-residue protein sequence, read N- to C-terminus: Neurotoxin LmNaTx21.1 (77 aa).

The signal sequence occupies residues 1–7 (LILVACL). In terms of domain architecture, LCN-type CS-alpha/beta spans 16-76 (KDGYPVDWNN…VEIKGYGRCR (61 aa)). Intrachain disulfides connect cysteine 26/cysteine 75, cysteine 30/cysteine 51, cysteine 37/cysteine 58, and cysteine 41/cysteine 60.

It belongs to the long (4 C-C) scorpion toxin superfamily. Sodium channel inhibitor family. Alpha subfamily. As to expression, expressed by the venom gland.

It is found in the secreted. In terms of biological role, binds voltage-independently at site-3 of voltage-gated sodium channels (Nav) and inhibits the inactivation of the activated channels, thereby blocking neuronal transmission. The sequence is that of Neurotoxin LmNaTx21.1 from Lychas mucronatus (Chinese swimming scorpion).